The following is a 256-amino-acid chain: Na(+)-translocating NADH-quinone reductase subunit E (256 aa).

The next 6 helical transmembrane spans lie at 1–21 (MWLG…AAFI), 50–70 (MSVA…HAFI), 83–103 (LASV…IAAF), 123–143 (GIFL…LFGI), 149–169 (FIPM…AIVI), and 189–209 (MGIS…LTGI). A compositionally biased stretch (polar residues) spans 229–249 (ENTTNPLKESSSKHQPSISKA). Residues 229–256 (ENTTNPLKESSSKHQPSISKARTQRRSL) are disordered.

It belongs to the NqrDE/RnfAE family. In terms of assembly, composed of six subunits; NqrA, NqrB, NqrC, NqrD, NqrE and NqrF.

The protein resides in the cell inner membrane. The enzyme catalyses a ubiquinone + n Na(+)(in) + NADH + H(+) = a ubiquinol + n Na(+)(out) + NAD(+). Its function is as follows. NQR complex catalyzes the reduction of ubiquinone-1 to ubiquinol by two successive reactions, coupled with the transport of Na(+) ions from the cytoplasm to the periplasm. NqrA to NqrE are probably involved in the second step, the conversion of ubisemiquinone to ubiquinol. This Chlamydia pneumoniae (Chlamydophila pneumoniae) protein is Na(+)-translocating NADH-quinone reductase subunit E.